A 95-amino-acid polypeptide reads, in one-letter code: Co-chaperonin GroES (95 aa).

The protein belongs to the GroES chaperonin family. As to quaternary structure, heptamer of 7 subunits arranged in a ring. Interacts with the chaperonin GroEL.

The protein resides in the cytoplasm. Together with the chaperonin GroEL, plays an essential role in assisting protein folding. The GroEL-GroES system forms a nano-cage that allows encapsulation of the non-native substrate proteins and provides a physical environment optimized to promote and accelerate protein folding. GroES binds to the apical surface of the GroEL ring, thereby capping the opening of the GroEL channel. This is Co-chaperonin GroES from Xylella fastidiosa (strain M12).